The following is a 509-amino-acid chain: Scavenger receptor class B member 1 (509 aa).

At 1–11 (MGVSSRARWVA) the chain is on the cytoplasmic side. Residues 12–32 (LGLGVLGLLCAALGVIMILMV) form a helical membrane-spanning segment. Topologically, residues 33–440 (PSLIKQQVLK…YTQLVLMPQV (408 aa)) are extracellular. Residues Asn102, Asn108, Asn116, Asn173, Asn212, Asn227, Asn255, Asn310, Asn330, and Asn383 are each glycosylated (N-linked (GlcNAc...) asparagine). The cysteines at positions 251 and 384 are disulfide-linked. The chain crosses the membrane as a helical span at residues 441 to 461 (LHYAQYVLLGLGGLLLLVPII). At 462 to 509 (YQLRSQEKCFLFWSGSKKGSQDKEAMQAYSESLMSPAAKGTVLQEAKL) the chain is on the cytoplasmic side.

The protein belongs to the CD36 family. In terms of assembly, the C-terminal region binds to PDZK1. Post-translationally, N-glycosylated. The six cysteines of the extracellular domain are all involved in intramolecular disulfide bonds.

It is found in the cell membrane. Its subcellular location is the membrane. It localises to the caveola. In terms of biological role, receptor for different ligands such as phospholipids, cholesterol ester, lipoproteins, phosphatidylserine and apoptotic cells. Receptor for HDL, mediating selective uptake of cholesteryl ether and HDL-dependent cholesterol efflux. Also facilitates the flux of free and esterified cholesterol between the cell surface and apoB-containing lipoproteins and modified lipoproteins, although less efficiently than HDL. May be involved in the phagocytosis of apoptotic cells, via its phosphatidylserine binding activity. The chain is Scavenger receptor class B member 1 (Scarb1) from Rattus norvegicus (Rat).